Consider the following 150-residue polypeptide: Histone H3-like centromeric protein A (150 aa).

Residues 1–56 (MRPGSTPASRRKSRPPRRVSPPLPTTSTRSPGRPSAPEQRKAPRATPKKRFRPGTR) form a disordered region. The span at 25–37 (TTSTRSPGRPSAP) shows a compositional bias: low complexity. Over residues 42-53 (APRATPKKRFRP) the composition is skewed to basic residues. The H3-like stretch occupies residues 53-150 (PGTRALMEIR…RIRGVTEGLG (98 aa)).

The protein belongs to the histone H3 family. As to quaternary structure, component of centromeric nucleosomes, where DNA is wrapped around a histone octamer core. The octamer contains two molecules each of H2A, H2B, CENPA and H4 assembled in one CENPA-H4 heterotetramer and two H2A-H2B heterodimers. CENPA modulates the DNA-binding characteristics of nucleosomes so that protruding DNA ends have higher flexibility than in nucleosomes containing conventional histone H3.

The protein localises to the nucleus. The protein resides in the chromosome. It is found in the centromere. In terms of biological role, histone H3-like nucleosomal protein that is specifically found in centromeric nucleosomes. Replaces conventional H3 in the nucleosome core of centromeric chromatin that serves as an assembly site for the inner kinetochore. The presence of CENPA subtly modifies the nucleosome structure and the way DNA is wrapped around the nucleosome and gives rise to protruding DNA ends that are less well-ordered and rigid compared to nucleosomes containing histone H3. May serve as an epigenetic mark that propagates centromere identity through replication and cell division. Required for recruitment and assembly of kinetochore proteins, and as a consequence required for progress through mitosis, chromosome segregation and cytokinesis. This Xenopus tropicalis (Western clawed frog) protein is Histone H3-like centromeric protein A (cenpa).